We begin with the raw amino-acid sequence, 619 residues long: Chaperone protein HscA homolog (619 aa).

Belongs to the heat shock protein 70 family.

In terms of biological role, chaperone involved in the maturation of iron-sulfur cluster-containing proteins. Has a low intrinsic ATPase activity which is markedly stimulated by HscB. The polypeptide is Chaperone protein HscA homolog (Pseudomonas aeruginosa (strain UCBPP-PA14)).